The primary structure comprises 1074 residues: Isoleucine--tRNA ligase (1074 aa).

The 'HIGH' region signature appears at 50–60 (PYTSGAAHMGT). A 'KMSKS' region motif is present at residues 605–609 (GMSKS). Residue lysine 608 participates in ATP binding.

Belongs to the class-I aminoacyl-tRNA synthetase family. IleS type 2 subfamily. As to quaternary structure, monomer. It depends on Zn(2+) as a cofactor.

Its subcellular location is the cytoplasm. The enzyme catalyses tRNA(Ile) + L-isoleucine + ATP = L-isoleucyl-tRNA(Ile) + AMP + diphosphate. In terms of biological role, catalyzes the attachment of isoleucine to tRNA(Ile). As IleRS can inadvertently accommodate and process structurally similar amino acids such as valine, to avoid such errors it has two additional distinct tRNA(Ile)-dependent editing activities. One activity is designated as 'pretransfer' editing and involves the hydrolysis of activated Val-AMP. The other activity is designated 'posttransfer' editing and involves deacylation of mischarged Val-tRNA(Ile). The protein is Isoleucine--tRNA ligase of Haloarcula marismortui (strain ATCC 43049 / DSM 3752 / JCM 8966 / VKM B-1809) (Halobacterium marismortui).